The following is a 354-amino-acid chain: Tryptophan--tRNA ligase (354 aa).

ATP contacts are provided by residues 13-15 (QPT) and 21-22 (GN). The short motif at 14–22 (PTGNLHLGN) is the 'HIGH' region element. Asp-137 provides a ligand contact to L-tryptophan. ATP contacts are provided by residues 149–151 (GDD), Val-208, and 217–221 (KMSKS). The 'KMSKS' region motif lies at 217–221 (KMSKS).

This sequence belongs to the class-I aminoacyl-tRNA synthetase family. In terms of assembly, homodimer.

The protein localises to the cytoplasm. The catalysed reaction is tRNA(Trp) + L-tryptophan + ATP = L-tryptophyl-tRNA(Trp) + AMP + diphosphate + H(+). In terms of biological role, catalyzes the attachment of tryptophan to tRNA(Trp). The polypeptide is Tryptophan--tRNA ligase (Rhizobium meliloti (strain 1021) (Ensifer meliloti)).